Consider the following 170-residue polypeptide: uncharacterized protein (170 aa).

Belongs to the mimivirus L223/L227/L812 family.

This is an uncharacterized protein from Acanthamoeba polyphaga mimivirus (APMV).